Here is a 466-residue protein sequence, read N- to C-terminus: Neuraminidase (466 aa).

Residues 1–8 (MLPSTVQT) are Intravirion-facing. Residues 9 to 31 (LTLLLTSGGVLLSLYVSASLSYL) form a helical membrane-spanning segment. Residues 13–35 (LTSGGVLLSLYVSASLSYLLYSD) form an involved in apical transport and lipid raft association region. Topologically, residues 32–466 (LYSDVLLKFS…DTVTGVDMAL (435 aa)) are virion surface. The hypervariable stalk region stretch occupies residues 38–86 (LKFSSTKTTAPTMSLECTNASNAQTVNHSATKEMTFPPPEPEWTYPRLS). Residues Asn56 and Asn64 are each glycosylated (N-linked (GlcNAc...) asparagine; by host). 8 disulfide bridges follow: Cys87-Cys420, Cys122-Cys127, Cys182-Cys229, Cys231-Cys236, Cys277-Cys291, Cys279-Cys289, Cys318-Cys337, and Cys424-Cys447. Residues 89–466 (GSTFQKALLI…DTVTGVDMAL (378 aa)) form a head of neuraminidase region. Residue Arg116 participates in substrate binding. Residue Asn144 is glycosylated (N-linked (GlcNAc...) asparagine; by host). Catalysis depends on Asp149, which acts as the Proton donor/acceptor. Residue Arg150 participates in substrate binding. Substrate is bound at residue 275–276 (EE). Asn284 carries an N-linked (GlcNAc...) asparagine; by host glycan. Arg292 contacts substrate. Ca(2+) contacts are provided by Asp293, Thr297, Asp324, and Gly346. Arg374 is a binding site for substrate. Tyr409 serves as the catalytic Nucleophile.

It belongs to the glycosyl hydrolase 34 family. Homotetramer. Ca(2+) is required as a cofactor. N-glycosylated.

The protein localises to the virion membrane. Its subcellular location is the host apical cell membrane. It catalyses the reaction Hydrolysis of alpha-(2-&gt;3)-, alpha-(2-&gt;6)-, alpha-(2-&gt;8)- glycosidic linkages of terminal sialic acid residues in oligosaccharides, glycoproteins, glycolipids, colominic acid and synthetic substrates.. Inhibited by the neuraminidase inhibitors zanamivir (Relenza) and oseltamivir (Tamiflu). These drugs interfere with the release of progeny virus from infected cells and are effective against all influenza strains. Resistance to neuraminidase inhibitors is quite rare. Catalyzes the removal of terminal sialic acid residues from viral and cellular glycoconjugates. Cleaves off the terminal sialic acids on the glycosylated HA during virus budding to facilitate virus release. Additionally helps virus spread through the circulation by further removing sialic acids from the cell surface. These cleavages prevent self-aggregation and ensure the efficient spread of the progeny virus from cell to cell. Otherwise, infection would be limited to one round of replication. Described as a receptor-destroying enzyme because it cleaves a terminal sialic acid from the cellular receptors. May facilitate viral invasion of the upper airways by cleaving the sialic acid moieties on the mucin of the airway epithelial cells. Likely to plays a role in the budding process through its association with lipid rafts during intracellular transport. May additionally display a raft-association independent effect on budding. Plays a role in the determination of host range restriction on replication and virulence. Sialidase activity in late endosome/lysosome traffic seems to enhance virus replication. The sequence is that of Neuraminidase from Influenza B virus (strain B/Lee/1940).